The following is a 244-amino-acid chain: Venom nerve growth factor 3 (244 aa).

A signal peptide spans 1 to 18; that stretch reads MSMLCYTLIIAFLIGIWA. The propeptide occupies 19–125; sequence APKSEDNVPL…TLNRNIRAKR (107 aa). Over residues 47 to 66 the composition is skewed to basic and acidic residues; that stretch reads GLKTSRNTDQRHPAPKKAED. The interval 47 to 67 is disordered; that stretch reads GLKTSRNTDQRHPAPKKAEDQ. Disulfide bonds link Cys-139–Cys-205, Cys-181–Cys-233, and Cys-193–Cys-235.

Belongs to the NGF-beta family. As to quaternary structure, homodimer; non-covalently linked. Expressed by the venom gland.

The protein localises to the secreted. Its function is as follows. Nerve growth factor is important for the development and maintenance of the sympathetic and sensory nervous systems. It stimulates division and differentiation of sympathetic and embryonic sensory neurons as well as basal forebrain cholinergic neurons in the brain. Its relevance in the snake venom is not clear. However, it has been shown to inhibit metalloproteinase-dependent proteolysis of platelet glycoprotein Ib alpha, suggesting a metalloproteinase inhibition to prevent metalloprotease autodigestion and/or protection against prey proteases. Binds a lipid between the two protein chains in the homodimer. The lipid-bound form promotes histamine relase from mouse mast cells, contrary to the lipid-free form. The polypeptide is Venom nerve growth factor 3 (Notechis scutatus scutatus (Mainland tiger snake)).